Consider the following 273-residue polypeptide: Dormancy associated translation inhibitor (273 aa).

As to quaternary structure, interacts with human TLR2.

Involved in translation regulation. Can also stimulate macrophages and peripheral blood mononuclear cells (PBMC) to secrete important cytokines that may be significant in granuloma formation and its maintenance. Increases secretion of IFN-gamma, TNF-alpha, IL-1 beta and IL-8 through human Toll-like receptor 2 (TLR2) signaling pathway. The polypeptide is Dormancy associated translation inhibitor (Mycobacterium tuberculosis (strain CDC 1551 / Oshkosh)).